The primary structure comprises 96 residues: MLKFDIQHFAHKKGGGSTSNGRDSESKRLGAKRADGQFVTGGSILYRQRGTKIYPGTNVGRGGDDTLFAKTDGVVRFERMGRDKKKVSVYPEVQEA.

Residues 1 to 9 (MLKFDIQHF) constitute a propeptide that is removed on maturation. The tract at residues 1–33 (MLKFDIQHFAHKKGGGSTSNGRDSESKRLGAKR) is disordered. Positions 22 to 33 (RDSESKRLGAKR) are enriched in basic and acidic residues.

This sequence belongs to the bacterial ribosomal protein bL27 family. The N-terminus is cleaved by ribosomal processing cysteine protease Prp.

This chain is Large ribosomal subunit protein bL27, found in Listeria innocua serovar 6a (strain ATCC BAA-680 / CLIP 11262).